Reading from the N-terminus, the 318-residue chain is Nucleotide-binding protein Jann_0539 (318 aa).

ATP is bound at residue 17-24; it reads GPSGAGRS. 64-67 provides a ligand contact to GTP; that stretch reads DPRT. Residues 278-318 are disordered; sequence GWQVSKRHRDVDKDASENSDRDRGASARTAASTDDGEAEQP. Over residues 286–302 the composition is skewed to basic and acidic residues; that stretch reads RDVDKDASENSDRDRGA.

Belongs to the RapZ-like family.

Functionally, displays ATPase and GTPase activities. This Jannaschia sp. (strain CCS1) protein is Nucleotide-binding protein Jann_0539.